Consider the following 286-residue polypeptide: 4-diphosphocytidyl-2-C-methyl-D-erythritol kinase (286 aa).

Lys13 is a catalytic residue. An ATP-binding site is contributed by 96–106 (PMGGGIGGGSS). Residue Asp138 is part of the active site.

It belongs to the GHMP kinase family. IspE subfamily.

It carries out the reaction 4-CDP-2-C-methyl-D-erythritol + ATP = 4-CDP-2-C-methyl-D-erythritol 2-phosphate + ADP + H(+). It functions in the pathway isoprenoid biosynthesis; isopentenyl diphosphate biosynthesis via DXP pathway; isopentenyl diphosphate from 1-deoxy-D-xylulose 5-phosphate: step 3/6. Its function is as follows. Catalyzes the phosphorylation of the position 2 hydroxy group of 4-diphosphocytidyl-2C-methyl-D-erythritol. The sequence is that of 4-diphosphocytidyl-2-C-methyl-D-erythritol kinase from Pseudoalteromonas atlantica (strain T6c / ATCC BAA-1087).